Reading from the N-terminus, the 453-residue chain is MSHDSEPQPVTATPGGPLNGSLKPPGDKSISHRAMILGLLAIGETQVEGLLEGDDVLRTAAAAKALGAQITREGEGRWRIVGVGIGGMQDPDGVLDFGNAGTGSRLMMGVVGGQPVTATFDGDASLRKRPMRRILDPILKMGAEIVSEAEGGRVPLTLRGPREAIPIRYELPVASAQIKSAVLLAGLNAPGTTTVIEKAASRDHTERMLHLFGAEVTVTPSGEGGHGRTVTLTGQPTLRGTDVVVPADPSSAAFPLVAALIVPGSEVILRGVMMNPLRTGLITTLIEMGADIERLDEREEGGETVADLRVRASRLKGVDVPAERAPSMIDEYPILAVAASFAEGTTRMNGLHELRVKESDRLAAVAAGLAANGVTHAIEGDDLIVTGNGQAPAGGGTVATHLDHRIAMAFLVLGLAAKSPVTVDDGAMIATSFPSFRPTMLALGARIEDGAAA.

The tract at residues 1-27 (MSHDSEPQPVTATPGGPLNGSLKPPGD) is disordered. Residues lysine 28, serine 29, and arginine 33 each coordinate 3-phosphoshikimate. Residue lysine 28 participates in phosphoenolpyruvate binding. Positions 101 and 129 each coordinate phosphoenolpyruvate. Residues serine 175, glutamine 177, aspartate 330, and lysine 357 each contribute to the 3-phosphoshikimate site. Glutamine 177 lines the phosphoenolpyruvate pocket. Catalysis depends on aspartate 330, which acts as the Proton acceptor. Residues arginine 361 and arginine 405 each contribute to the phosphoenolpyruvate site.

Belongs to the EPSP synthase family. Monomer.

The protein localises to the cytoplasm. The enzyme catalyses 3-phosphoshikimate + phosphoenolpyruvate = 5-O-(1-carboxyvinyl)-3-phosphoshikimate + phosphate. It participates in metabolic intermediate biosynthesis; chorismate biosynthesis; chorismate from D-erythrose 4-phosphate and phosphoenolpyruvate: step 6/7. In terms of biological role, catalyzes the transfer of the enolpyruvyl moiety of phosphoenolpyruvate (PEP) to the 5-hydroxyl of shikimate-3-phosphate (S3P) to produce enolpyruvyl shikimate-3-phosphate and inorganic phosphate. This chain is 3-phosphoshikimate 1-carboxyvinyltransferase, found in Methylorubrum extorquens (strain CM4 / NCIMB 13688) (Methylobacterium extorquens).